Consider the following 180-residue polypeptide: Threonylcarbamoyl-AMP synthase (180 aa).

Residues 1-180 (MRARALQHFL…DLITGAIVRP (180 aa)) form the YrdC-like domain.

Belongs to the SUA5 family. TsaC subfamily.

The protein resides in the cytoplasm. It catalyses the reaction L-threonine + hydrogencarbonate + ATP = L-threonylcarbamoyladenylate + diphosphate + H2O. Required for the formation of a threonylcarbamoyl group on adenosine at position 37 (t(6)A37) in tRNAs that read codons beginning with adenine. Catalyzes the conversion of L-threonine, HCO(3)(-)/CO(2) and ATP to give threonylcarbamoyl-AMP (TC-AMP) as the acyladenylate intermediate, with the release of diphosphate. The polypeptide is Threonylcarbamoyl-AMP synthase (Methylobacillus flagellatus (strain ATCC 51484 / DSM 6875 / VKM B-1610 / KT)).